A 236-amino-acid polypeptide reads, in one-letter code: Demethylmenaquinone methyltransferase (236 aa).

S-adenosyl-L-methionine is bound by residues threonine 58, aspartate 79, and asparagine 106–alanine 107.

This sequence belongs to the class I-like SAM-binding methyltransferase superfamily. MenG/UbiE family.

The catalysed reaction is a 2-demethylmenaquinol + S-adenosyl-L-methionine = a menaquinol + S-adenosyl-L-homocysteine + H(+). It functions in the pathway quinol/quinone metabolism; menaquinone biosynthesis; menaquinol from 1,4-dihydroxy-2-naphthoate: step 2/2. Its function is as follows. Methyltransferase required for the conversion of demethylmenaquinol (DMKH2) to menaquinol (MKH2). The polypeptide is Demethylmenaquinone methyltransferase (Listeria welshimeri serovar 6b (strain ATCC 35897 / DSM 20650 / CCUG 15529 / CIP 8149 / NCTC 11857 / SLCC 5334 / V8)).